Reading from the N-terminus, the 600-residue chain is Integrator complex subunit 11 (600 aa).

His-68, His-70, Asp-72, His-73, His-157, and Asp-178 together coordinate Zn(2+). Positions 68–73 (HFHLDH) match the HXHXDH motif motif. Residue Glu-203 is part of the active site. A Glycyl lysine isopeptide (Lys-Gly) (interchain with G-Cter in SUMO) cross-link involves residue Lys-381. His-414 is a Zn(2+) binding site. Glycyl lysine isopeptide (Lys-Gly) (interchain with G-Cter in SUMO) cross-links involve residues Lys-462 and Lys-475. Residues 469 to 479 (LLPEAKKPRLL) carry the Nuclear localization signal motif.

It belongs to the metallo-beta-lactamase superfamily. RNA-metabolizing metallo-beta-lactamase-like family. INTS11 subfamily. Component of the Integrator complex, composed of core subunits INTS1, INTS2, INTS3, INTS4, INTS5, INTS6, INTS7, INTS8, INTS9/RC74, INTS10, INTS11/CPSF3L, INTS12, INTS13, INTS14 and INTS15. The core complex associates with protein phosphatase 2A subunits PPP2CA and PPP2R1A, to form the Integrator-PP2A (INTAC) complex. INTS11 is part of the RNA endonuclease subcomplex, composed of INTS4, INTS9, INTS11 and inositol hexakisphosphate (InsP6). Interacts with WDR73; interaction is required for the assembly of the RNA endonuclease subcomplex in the cytoplasm. Interacts with BRAT1; interaction is required for the assembly of the RNA endonuclease subcomplex and inhibits the endonuclease activity of INTS11 before formation of mature integrator complex. Zn(2+) is required as a cofactor. Sumoylated; sumoylation regulates its subcellular location and is required for integrator complex integrity.

It is found in the nucleus. The protein localises to the cytoplasm. With respect to regulation, the RNA endonuclease activity is inhibited by BRAT1 that forms hyrogen bond and hydrophobic interactions with the active site. In terms of biological role, RNA endonuclease component of the integrator complex, a multiprotein complex that terminates RNA polymerase II (Pol II) transcription in the promoter-proximal region of genes. The integrator complex provides a quality checkpoint during transcription elongation by driving premature transcription termination of transcripts that are unfavorably configured for transcriptional elongation: the complex terminates transcription by (1) catalyzing dephosphorylation of the C-terminal domain (CTD) of Pol II subunit POLR2A/RPB1 and SUPT5H/SPT5, (2) degrading the exiting nascent RNA transcript via endonuclease activity and (3) promoting the release of Pol II from bound DNA. The integrator complex is also involved in terminating the synthesis of non-coding Pol II transcripts, such as enhancer RNAs (eRNAs), small nuclear RNAs (snRNAs), telomerase RNAs and long non-coding RNAs (lncRNAs). Within the integrator complex, INTS11 constitutes the RNA endonuclease subunit that degrades exiting nascent RNA transcripts. Mediates recruitment of cytoplasmic dynein to the nuclear envelope, probably as component of the integrator complex. This chain is Integrator complex subunit 11 (Ints11), found in Rattus norvegicus (Rat).